The chain runs to 126 residues: Protein ApaG (126 aa).

The ApaG domain maps to 2-126; it reads SDPRYQIDVS…FRLAVPGALH (125 aa).

The sequence is that of Protein ApaG from Azotobacter vinelandii (strain DJ / ATCC BAA-1303).